Here is a 1040-residue protein sequence, read N- to C-terminus: Multidrug resistance protein MdtB (1040 aa).

Transmembrane regions (helical) follow at residues 15 to 37 (LFIM…GIIG), 345 to 362 (FELM…YLFL), 367 to 389 (ATII…MVFL), 396 to 418 (LTLM…VIEN), 438 to 460 (GEIG…PLLF), 472 to 494 (FAIT…TPMM), 535 to 557 (HPWL…WVFI), 867 to 889 (VWLI…ESFI), 909 to 931 (LMIA…IGIV), 968 to 990 (ILMT…GVGA), and 1000 to 1022 (MVGG…YLLF).

It belongs to the resistance-nodulation-cell division (RND) (TC 2.A.6) family. MdtB subfamily. Part of a tripartite efflux system composed of MdtA, MdtB and MdtC. MdtB forms a heteromultimer with MdtC.

Its subcellular location is the cell inner membrane. Its function is as follows. The MdtABC tripartite complex confers resistance against novobiocin and deoxycholate. This is Multidrug resistance protein MdtB from Escherichia coli O157:H7.